A 428-amino-acid polypeptide reads, in one-letter code: Adenylosuccinate synthetase (428 aa).

GTP-binding positions include Gly-12–Lys-18 and Gly-40–Thr-42. Asp-13 serves as the catalytic Proton acceptor. Mg(2+)-binding residues include Asp-13 and Gly-40. IMP contacts are provided by residues Asp-13–Lys-16, Asn-38–His-41, Thr-130, Arg-144, Gln-225, Thr-240, and Arg-304. His-41 serves as the catalytic Proton donor. Val-300 to Arg-306 is a binding site for substrate. GTP is bound by residues Arg-306, Lys-332–Asp-334, and Ser-414–Gly-416.

It belongs to the adenylosuccinate synthetase family. As to quaternary structure, homodimer. It depends on Mg(2+) as a cofactor.

The protein resides in the cytoplasm. The enzyme catalyses IMP + L-aspartate + GTP = N(6)-(1,2-dicarboxyethyl)-AMP + GDP + phosphate + 2 H(+). The protein operates within purine metabolism; AMP biosynthesis via de novo pathway; AMP from IMP: step 1/2. Plays an important role in the de novo pathway of purine nucleotide biosynthesis. Catalyzes the first committed step in the biosynthesis of AMP from IMP. The protein is Adenylosuccinate synthetase of Clostridium botulinum (strain Okra / Type B1).